We begin with the raw amino-acid sequence, 301 residues long: Heme A synthase (301 aa).

The Cytoplasmic portion of the chain corresponds to 1–5 (MHKKL). A helical membrane pass occupies residues 6–26 (AFFSGFVTLGMMLVLIMGGTV). Topologically, residues 27–62 (TKTDSGDGCGTDWPLCHGKLIPTNPSVETMIEYSHR) are extracellular. The cysteines at positions 35 and 42 are disulfide-linked. Glutamate 58 is an active-site residue. Histidine 61 contacts heme o. A helical transmembrane segment spans residues 63 to 83 (VVSGIEGLLIIALAIWTFIAV). Over 84 to 90 (KHRVDVK) the chain is Cytoplasmic. A helical transmembrane segment spans residues 91-111 (IFAFLAFIFMLIQSIIGAGAV). The Extracellular segment spans residues 112–121 (IWQQSDAILA). The helical transmembrane segment at 122 to 142 (LHFGISLVSFASLLILTILLF) threads the bilayer. A heme o-binding site is contributed by histidine 123. The Cytoplasmic segment spans residues 143–158 (EGDREHQVVSRRLRSH). The chain crosses the membrane as a helical span at residues 159–179 (LYGLSIYTMIVVYTGAYVRHL). The Extracellular portion of the chain corresponds to 180–203 (GATYACVGWPICEQEVWTFESYVQ). An intrachain disulfide couples cysteine 185 to cysteine 191. Residues 204 to 224 (MGHRVMAGLLVLYTLYVLYLA) form a helical membrane-spanning segment. Histidine 206 lines the heme b pocket. Residues 225–234 (RKEMNRLIER) are Cytoplasmic-facing. Residues 235–255 (GMMASLFFILLQVGTGAWIVL) traverse the membrane as a helical segment. Topologically, residues 256–259 (GGHA) are extracellular. A helical transmembrane segment spans residues 260-280 (TYVPLLHAFLITCYFGILSYL). Histidine 266 lines the heme b pocket. Topologically, residues 281-301 (SYHAYRSTARQDGAQLKNMNG) are cytoplasmic.

It belongs to the COX15/CtaA family. Type 1 subfamily. As to quaternary structure, interacts with CtaB. Heme b serves as cofactor.

Its subcellular location is the cell membrane. The enzyme catalyses Fe(II)-heme o + 2 A + H2O = Fe(II)-heme a + 2 AH2. It participates in porphyrin-containing compound metabolism; heme A biosynthesis; heme A from heme O: step 1/1. Catalyzes the conversion of heme O to heme A by two successive hydroxylations of the methyl group at C8. The first hydroxylation forms heme I, the second hydroxylation results in an unstable dihydroxymethyl group, which spontaneously dehydrates, resulting in the formyl group of heme A. This chain is Heme A synthase, found in Exiguobacterium sp. (strain ATCC BAA-1283 / AT1b).